The primary structure comprises 449 residues: Exodeoxyribonuclease 7 large subunit (449 aa).

The protein belongs to the XseA family. In terms of assembly, heterooligomer composed of large and small subunits.

The protein localises to the cytoplasm. It carries out the reaction Exonucleolytic cleavage in either 5'- to 3'- or 3'- to 5'-direction to yield nucleoside 5'-phosphates.. Functionally, bidirectionally degrades single-stranded DNA into large acid-insoluble oligonucleotides, which are then degraded further into small acid-soluble oligonucleotides. The sequence is that of Exodeoxyribonuclease 7 large subunit from Salmonella heidelberg (strain SL476).